The chain runs to 338 residues: 3-dehydroquinate synthase (338 aa).

The protein belongs to the archaeal-type DHQ synthase family.

The catalysed reaction is 2-amino-2,3,7-trideoxy-D-lyxo-hept-6-ulosonate + NAD(+) + H2O = 3-dehydroquinate + NH4(+) + NADH + H(+). Functionally, catalyzes the oxidative deamination and cyclization of 2-amino-3,7-dideoxy-D-threo-hept-6-ulosonic acid (ADH) to yield 3-dehydroquinate (DHQ), which is fed into the canonical shikimic pathway of aromatic amino acid biosynthesis. In Cenarchaeum symbiosum (strain A), this protein is 3-dehydroquinate synthase.